Here is a 398-residue protein sequence, read N- to C-terminus: Cytochrome b (398 aa).

Transmembrane regions (helical) follow at residues 38–58, 82–104, 119–139, and 185–205; these read FGSL…FLAM, WLLR…LHIF, VWCL…IGYV, and FFSL…LHLA. Residues histidine 88 and histidine 102 each coordinate heme b. Residues histidine 189 and histidine 203 each contribute to the heme b site. Residue histidine 208 participates in a ubiquinone binding. The next 4 membrane-spanning stretches (helical) occupy residues 231–251, 295–315, 327–347, and 354–373; these read FYVK…IWIF, AGGV…PFFK, IYQG…WIGC, and FVTI…AITP.

This sequence belongs to the cytochrome b family. As to quaternary structure, the main subunits of complex b-c1 are: cytochrome b, cytochrome c1 and the Rieske protein. Heme b is required as a cofactor.

It localises to the mitochondrion inner membrane. In terms of biological role, component of the ubiquinol-cytochrome c reductase complex (complex III or cytochrome b-c1 complex) that is part of the mitochondrial respiratory chain. The b-c1 complex mediates electron transfer from ubiquinol to cytochrome c. Contributes to the generation of a proton gradient across the mitochondrial membrane that is then used for ATP synthesis. This Triticum aestivum (Wheat) protein is Cytochrome b (MT-CYB).